A 117-amino-acid polypeptide reads, in one-letter code: Small ribosomal subunit protein bS6 (117 aa).

This sequence belongs to the bacterial ribosomal protein bS6 family.

In terms of biological role, binds together with bS18 to 16S ribosomal RNA. The protein is Small ribosomal subunit protein bS6 of Porphyromonas gingivalis (strain ATCC BAA-308 / W83).